Here is a 357-residue protein sequence, read N- to C-terminus: DNA polymerase IV (357 aa).

A UmuC domain is found at 4-185 (IIHVDMDCYF…LSLRQIPGVG (182 aa)). Asp8 and Asp103 together coordinate Mg(2+). Glu104 is an active-site residue.

The protein belongs to the DNA polymerase type-Y family. As to quaternary structure, monomer. Mg(2+) serves as cofactor.

It localises to the cytoplasm. It catalyses the reaction DNA(n) + a 2'-deoxyribonucleoside 5'-triphosphate = DNA(n+1) + diphosphate. In terms of biological role, poorly processive, error-prone DNA polymerase involved in untargeted mutagenesis. Copies undamaged DNA at stalled replication forks, which arise in vivo from mismatched or misaligned primer ends. These misaligned primers can be extended by PolIV. Exhibits no 3'-5' exonuclease (proofreading) activity. May be involved in translesional synthesis, in conjunction with the beta clamp from PolIII. This is DNA polymerase IV from Shewanella oneidensis (strain ATCC 700550 / JCM 31522 / CIP 106686 / LMG 19005 / NCIMB 14063 / MR-1).